The chain runs to 314 residues: tRNA pseudouridine synthase B (314 aa).

The active-site Nucleophile is the D47.

It belongs to the pseudouridine synthase TruB family. Type 1 subfamily.

The enzyme catalyses uridine(55) in tRNA = pseudouridine(55) in tRNA. Its function is as follows. Responsible for synthesis of pseudouridine from uracil-55 in the psi GC loop of transfer RNAs. The protein is tRNA pseudouridine synthase B of Vibrio parahaemolyticus serotype O3:K6 (strain RIMD 2210633).